Reading from the N-terminus, the 470-residue chain is MKEFENPPPITVAIGLGRSGVAAARYLNDQGEKVQIFESSKKASFGKLSGNLEKEGIKVNLGVPLNFSSFQPILEKLALVIVSPGIPWDHPTLNQLRKRGIIVESEINLAWRALKNTPWVGITGTNGKTTVTHMLNHVLNNSFIESTIGGNVGKAATEIALALRKSTKHKPKWLIMELSSYQIETAPEISPEIGIWTTLTPDHLERHGSLENYFAIKRTLIANSSIRIYNADDKYLSKNRLNLPKGLWVSAQKYNSNINQLDFWISSNGMVIEQGNELFHSSALQLPGDHNLQNLLLVSAAARKIGLSGMAIENALISFAGITHRLEKVDKIIDIDIFNDSKATNFDSAEIGLKATSAPVILIAGGLSKQGIYLDWINQIKEKVCAVILIGESRVKLQHLIKSHGFRGEIVCYEKLDKAVDKAIKLGVKFRAKSILFSPGCASFDQYSNFEERGDHFKKLIKESSINYKL.

Position 124 to 130 (Gly124 to Thr130) interacts with ATP.

The protein belongs to the MurCDEF family.

Its subcellular location is the cytoplasm. The catalysed reaction is UDP-N-acetyl-alpha-D-muramoyl-L-alanine + D-glutamate + ATP = UDP-N-acetyl-alpha-D-muramoyl-L-alanyl-D-glutamate + ADP + phosphate + H(+). It participates in cell wall biogenesis; peptidoglycan biosynthesis. Its function is as follows. Cell wall formation. Catalyzes the addition of glutamate to the nucleotide precursor UDP-N-acetylmuramoyl-L-alanine (UMA). In Prochlorococcus marinus (strain SARG / CCMP1375 / SS120), this protein is UDP-N-acetylmuramoylalanine--D-glutamate ligase.